Here is a 187-residue protein sequence, read N- to C-terminus: Peptidyl-tRNA hydrolase (187 aa).

Phe14 lines the tRNA pocket. His19 serves as the catalytic Proton acceptor. Positions 64, 66, and 112 each coordinate tRNA.

Belongs to the PTH family. Monomer.

It localises to the cytoplasm. The enzyme catalyses an N-acyl-L-alpha-aminoacyl-tRNA + H2O = an N-acyl-L-amino acid + a tRNA + H(+). Hydrolyzes ribosome-free peptidyl-tRNAs (with 1 or more amino acids incorporated), which drop off the ribosome during protein synthesis, or as a result of ribosome stalling. Its function is as follows. Catalyzes the release of premature peptidyl moieties from peptidyl-tRNA molecules trapped in stalled 50S ribosomal subunits, and thus maintains levels of free tRNAs and 50S ribosomes. In Oceanobacillus iheyensis (strain DSM 14371 / CIP 107618 / JCM 11309 / KCTC 3954 / HTE831), this protein is Peptidyl-tRNA hydrolase.